A 203-amino-acid polypeptide reads, in one-letter code: Small ribosomal subunit protein uS7B (203 aa).

This sequence belongs to the universal ribosomal protein uS7 family. In terms of assembly, component of the small ribosomal subunit (SSU). Mature yeast ribosomes consist of a small (40S) and a large (60S) subunit. The 40S small subunit contains 1 molecule of ribosomal RNA (18S rRNA) and at least 33 different proteins. The large 60S subunit contains 3 rRNA molecules (25S, 5.8S and 5S rRNA) and at least 46 different proteins.

The protein localises to the cytoplasm. Component of the ribosome, a large ribonucleoprotein complex responsible for the synthesis of proteins in the cell. The small ribosomal subunit (SSU) binds messenger RNAs (mRNAs) and translates the encoded message by selecting cognate aminoacyl-transfer RNA (tRNA) molecules. The large subunit (LSU) contains the ribosomal catalytic site termed the peptidyl transferase center (PTC), which catalyzes the formation of peptide bonds, thereby polymerizing the amino acids delivered by tRNAs into a polypeptide chain. The nascent polypeptides leave the ribosome through a tunnel in the LSU and interact with protein factors that function in enzymatic processing, targeting, and the membrane insertion of nascent chains at the exit of the ribosomal tunnel. This chain is Small ribosomal subunit protein uS7B (rps502), found in Schizosaccharomyces pombe (strain 972 / ATCC 24843) (Fission yeast).